The primary structure comprises 360 residues: Malate dehydrogenase (360 aa).

This sequence belongs to the LDH2/MDH2 oxidoreductase family. Homodimer.

Its subcellular location is the cytoplasm. It carries out the reaction (S)-malate + NAD(+) = oxaloacetate + NADH + H(+). This chain is Malate dehydrogenase (mdh), found in Pyrococcus horikoshii (strain ATCC 700860 / DSM 12428 / JCM 9974 / NBRC 100139 / OT-3).